Here is a 427-residue protein sequence, read N- to C-terminus: Protein adenylyltransferase Fic (427 aa).

A helical transmembrane segment spans residues 17-37 (LLLASLAGLSIAIIVTHAPVF). 2 TPR repeats span residues 77-110 (ALAA…APHH) and 111-143 (PEIL…NPLD). The Inhibitory (S/T)XXXE(G/N) motif signature appears at 200-205 (SNAIEG). Residues Glu204 and 286–289 (VSDH) each bind ATP. A Fido domain is found at 255–390 (ITIDDIIEIH…IRPFIRFVAR (136 aa)). The active site involves His333. Residues 337 to 344 (DGNGRTAR), 369 to 370 (YY), and Asn377 each bind ATP.

It belongs to the fic family. Homodimer.

The protein localises to the membrane. It catalyses the reaction L-tyrosyl-[protein] + ATP = O-(5'-adenylyl)-L-tyrosyl-[protein] + diphosphate. The enzyme catalyses L-threonyl-[protein] + ATP = 3-O-(5'-adenylyl)-L-threonyl-[protein] + diphosphate. It carries out the reaction 3-O-(5'-adenylyl)-L-threonyl-[protein] + H2O = L-threonyl-[protein] + AMP + H(+). The side chain of Glu-204 determines which of the two opposing activities (AMPylase or de-AMPylase) will take place. In response to endoplasmic reticulum stress, mediates de-AMPylase activity. Adenylyltransferase activity is inhibited by the inhibitory helix present at the N-terminus: Glu-204 binds ATP and competes with ATP-binding at Arg-344, thereby preventing adenylyltransferase activity. In unstressed cells, disengagement of Glu-204 promotes adenylyltransferase activity. Activation dissociates ATP-binding from Glu-204, allowing ordered binding of the entire ATP moiety with the alpha-phosphate in an orientation that is productive for accepting an incoming target hydroxyl side chain. Its function is as follows. Protein that can both mediate the addition of adenosine 5'-monophosphate (AMP) to specific residues of target proteins (AMPylation), and the removal of the same modification from target proteins (de-AMPylation), depending on the context. The side chain of Glu-204 determines which of the two opposing activities (AMPylase or de-AMPylase) will take place. Acts as a key regulator of the unfolded protein response (UPR) by mediating AMPylation or de-AMPylation of Hsc70-3/BiP. In unstressed cells, acts as an adenylyltransferase by mediating AMPylation of Hsc70-3/BiP, thereby inactivating it. In response to endoplasmic reticulum stress, acts as a phosphodiesterase by mediating removal of ATP (de-AMPylation) from Hsc70-3/BiP, leading to restore HSPA5/BiP activity. The protein is Protein adenylyltransferase Fic of Nematostella vectensis (Starlet sea anemone).